The sequence spans 232 residues: Ribonuclease 3 (232 aa).

The region spanning 5-134 (NDAISKIIDY…LIGAIYIDGG (130 aa)) is the RNase III domain. Glu47 contributes to the Mg(2+) binding site. Asp51 is a catalytic residue. Mg(2+) contacts are provided by Asn120 and Glu123. Glu123 is a catalytic residue. Residues 159–228 (DPKTSLQEWT…AELMLEKIGK (70 aa)) enclose the DRBM domain.

The protein belongs to the ribonuclease III family. In terms of assembly, homodimer. Requires Mg(2+) as cofactor.

The protein resides in the cytoplasm. It carries out the reaction Endonucleolytic cleavage to 5'-phosphomonoester.. Its function is as follows. Digests double-stranded RNA. Involved in the processing of primary rRNA transcript to yield the immediate precursors to the large and small rRNAs (23S and 16S). Processes some mRNAs, and tRNAs when they are encoded in the rRNA operon. Processes pre-crRNA and tracrRNA of type II CRISPR loci if present in the organism. This chain is Ribonuclease 3, found in Wolbachia pipientis wMel.